Reading from the N-terminus, the 589-residue chain is Oligo-1,6-glucosidase IMA2 (589 aa).

Catalysis depends on D215, which acts as the Nucleophile. E277 serves as the catalytic Proton donor.

The protein belongs to the glycosyl hydrolase 13 family.

It catalyses the reaction Hydrolysis of (1-&gt;6)-alpha-D-glucosidic linkages in some oligosaccharides produced from starch and glycogen by alpha-amylase, and in isomaltose.. Alpha-glucosidase with specificity for isomaltase, methyl-alpha-glucoside, and palatinose. The polypeptide is Oligo-1,6-glucosidase IMA2 (IMA2) (Saccharomyces cerevisiae (strain ATCC 204508 / S288c) (Baker's yeast)).